Consider the following 268-residue polypeptide: Phosphoethanolamine/phosphocholine phosphatase (268 aa).

Aspartate 32 acts as the Nucleophile in catalysis. 2 residues coordinate Mg(2+): aspartate 32 and aspartate 34. Aspartate 34 acts as the Proton donor in catalysis. Substrate contacts are provided by aspartate 43 and aspartate 123. Residue aspartate 203 participates in Mg(2+) binding.

This sequence belongs to the HAD-like hydrolase superfamily. PHOSPHO family. It depends on Mg(2+) as a cofactor. In terms of tissue distribution, expressed at sites of mineralization in bone and cartilage. Highly expressed in hypertrophic chondrocytes compared to non-chondrogenic tissues. Expressed in chondrocytes but not in heart, liver, lung, kidney, spleen, muscle, adipose tissues not duodenum. In diaphyseal cortical bone, it is expressed in the osteoid layer of the periosteum, forming surfaces of growing osteons, and newly formed osteocytes, whereas it is not expressed in the endosteum and closed osteons. In growth plate cartilage, it is limited to the early hypertrophic chondrocytes and the ossification groove of Ranvier. Highly expressed on the mineralization surfaces of the cartilage remnants and trabecular bone within the primary spongiosa. Expressed in 17-day-old embryonic calvaria, the osteoid present on the intramembranous and periosteal bone surfaces but not in soft tissues examined.

It localises to the extracellular vesicle. It catalyses the reaction phosphoethanolamine + H2O = ethanolamine + phosphate. It carries out the reaction phosphocholine + H2O = choline + phosphate. Phosphatase that has a high activity toward phosphoethanolamine (PEA) and phosphocholine (PCho). Involved in the generation of inorganic phosphate for bone mineralization. This is Phosphoethanolamine/phosphocholine phosphatase (PHOSPHO1) from Gallus gallus (Chicken).